Here is a 354-residue protein sequence, read N- to C-terminus: P2Y purinoceptor 13 (354 aa).

The Extracellular portion of the chain corresponds to 1-49 (MTAAIRRQRELSILPKVTLEAMNTTVMQGFNRSERCPRDTRIVQLVFPA). Residues Asn-23 and Asn-31 are each glycosylated (N-linked (GlcNAc...) asparagine). The chain crosses the membrane as a helical span at residues 50-70 (LYTVVFLTGILLNTLALWVFV). Residues 71–77 (HIPSSST) are Cytoplasmic-facing. The chain crosses the membrane as a helical span at residues 78–98 (FIIYLKNTLVADLIMTLMLPF). The Extracellular segment spans residues 99–117 (KILSDSHLAPWQLRAFVCR). Residues Cys-116 and Cys-194 are joined by a disulfide bond. Residues 118-138 (FSSVIFYETMYVGIVLLGLIA) traverse the membrane as a helical segment. At 139–161 (FDRFLKIIRPLRNIFLKKPVFAK) the chain is on the cytoplasmic side. A helical transmembrane segment spans residues 162–182 (TVSIFIWFFLFFISLPNTILS). Residues 183 to 211 (NKEATPSSVKKCASLKGPLGLKWHQMVNN) are Extracellular-facing. Residues 212 to 232 (ICQFIFWTVFILMLVFYVVIA) traverse the membrane as a helical segment. Residues 233 to 252 (KKVYDSYRKSKSKDRKNNKK) lie on the Cytoplasmic side of the membrane. The chain crosses the membrane as a helical span at residues 253 to 273 (LEGKVFVVVAVFFVCFAPFHF). Over 274–300 (ARVPYTHSQTNNKTDCRLQNQLFIAKE) the chain is Extracellular. A glycan (N-linked (GlcNAc...) asparagine) is linked at Asn-285. The chain crosses the membrane as a helical span at residues 301–321 (TTLFLAATNICMDPLIYIFLC). The Cytoplasmic portion of the chain corresponds to 322–333 (KKFTEKLPCMQG). Residues 335–354 (KTTASSQENHSSQTDNITLG) form a disordered region.

It belongs to the G-protein coupled receptor 1 family. Strong expression in spleen and adult brain. Lower expression in placenta, lung, liver, spinal cord, thymus, small intestine, uterus, stomach, testis, fetal brain, and adrenal gland. Not detected in pancreas, heart, kidney, skeletal muscle, ovary or fetal aorta. Clearly detected in lymph node and bone marrow, weakly detected in peripheral blood mononuclear cells (PBMC) and in peripheral blood leukocytes (PBL), but not detected in polymorphonuclear cells (PMN). In the brain, detected in all brain regions examined.

The protein resides in the cell membrane. Functionally, receptor for ADP. Coupled to G(i)-proteins. May play a role in hematopoiesis and the immune system. This chain is P2Y purinoceptor 13 (P2RY13), found in Homo sapiens (Human).